A 144-amino-acid chain; its full sequence is UPF0292 protein MA_4098 (144 aa).

The Toprim domain maps to 28–109; the sequence is GAVIIVEGKR…KPELQIRNKL (82 aa). Residues glutamate 34, aspartate 78, and aspartate 80 each contribute to the Mg(2+) site.

The protein belongs to the UPF0292 family. It depends on Mg(2+) as a cofactor.

The sequence is that of UPF0292 protein MA_4098 from Methanosarcina acetivorans (strain ATCC 35395 / DSM 2834 / JCM 12185 / C2A).